We begin with the raw amino-acid sequence, 241 residues long: Probable transcriptional regulatory protein AZOSEA20720 (241 aa).

A disordered region spans residues 1–21 (MAGHSKWANIQHRKGRQDAKR).

This sequence belongs to the TACO1 family.

The protein localises to the cytoplasm. The chain is Probable transcriptional regulatory protein AZOSEA20720 from Aromatoleum aromaticum (strain DSM 19018 / LMG 30748 / EbN1) (Azoarcus sp. (strain EbN1)).